The primary structure comprises 195 residues: Penicillin-binding protein activator LpoB (195 aa).

Residues Met-1–Ser-16 form the signal peptide. A lipid anchor (N-palmitoyl cysteine) is attached at Cys-17. Cys-17 is lipidated: S-diacylglycerol cysteine. The tract at residues Ser-19–Val-51 is disordered. The span at Ala-23–Val-51 shows a compositional bias: pro residues.

This sequence belongs to the LpoB family. Interacts with PBP1b.

Its subcellular location is the cell outer membrane. Regulator of peptidoglycan synthesis that is essential for the function of penicillin-binding protein 1B (PBP1b). This chain is Penicillin-binding protein activator LpoB, found in Sodalis glossinidius (strain morsitans).